The following is a 269-amino-acid chain: 2-dehydro-3-deoxyphosphooctonate aldolase (269 aa).

This sequence belongs to the KdsA family.

The protein localises to the cytoplasm. The catalysed reaction is D-arabinose 5-phosphate + phosphoenolpyruvate + H2O = 3-deoxy-alpha-D-manno-2-octulosonate-8-phosphate + phosphate. It participates in carbohydrate biosynthesis; 3-deoxy-D-manno-octulosonate biosynthesis; 3-deoxy-D-manno-octulosonate from D-ribulose 5-phosphate: step 2/3. It functions in the pathway bacterial outer membrane biogenesis; lipopolysaccharide biosynthesis. The sequence is that of 2-dehydro-3-deoxyphosphooctonate aldolase from Chlamydia trachomatis serovar L2 (strain ATCC VR-902B / DSM 19102 / 434/Bu).